The primary structure comprises 197 residues: Putative NADH dehydrogenase/NAD(P)H nitroreductase Plav_3612 (197 aa).

It belongs to the nitroreductase family. HadB/RutE subfamily. Requires FMN as cofactor.

The polypeptide is Putative NADH dehydrogenase/NAD(P)H nitroreductase Plav_3612 (Parvibaculum lavamentivorans (strain DS-1 / DSM 13023 / NCIMB 13966)).